The chain runs to 113 residues: Endoribonuclease SymE (113 aa).

Positions 29–74 (GRYPDYSRIPAITLKGQWLEVAGFATGTAVDVKVMEGCIVLTAQPP) constitute a SpoVT-AbrB domain.

It belongs to the SymE family.

The protein resides in the cytoplasm. In terms of biological role, involved in the degradation and recycling of damaged RNA. It is itself a target for degradation by the ATP-dependent protease Lon. The chain is Endoribonuclease SymE from Escherichia coli O7:K1 (strain IAI39 / ExPEC).